Reading from the N-terminus, the 464-residue chain is Mitogen-activated protein kinase 10 (464 aa).

The Protein kinase domain maps to 64-359; it reads YQNLKPIGSG…VDDALQHPYI (296 aa). ATP contacts are provided by residues 70-78 and K93; that span reads IGSGAQGIV. D189 acts as the Proton acceptor in catalysis. T221 bears the Phosphothreonine; by MAP2K7 mark. Positions 221–223 match the TXY motif; the sequence is TPY. Phosphotyrosine; by MAP2K4 is present on Y223. The tract at residues 405-464 is disordered; the sequence is TKNGVVKSQPSPSGAAVNSSESLPPSSAVNDISSMSTDQTLASDTDSSLEASAGPLGCCR. A compositionally biased stretch (polar residues) spans 410–454; the sequence is VKSQPSPSGAAVNSSESLPPSSAVNDISSMSTDQTLASDTDSSLE. 2 S-palmitoyl cysteine lipidation sites follow: C462 and C463.

Belongs to the protein kinase superfamily. CMGC Ser/Thr protein kinase family. MAP kinase subfamily. In terms of assembly, interacts with MAPK8IP1/JIP-1, MAPK8IP3/JIP-3/JSAP1 and SPAG9/MAPK8IP4/JIP4. Interacts with HDAC9 and MAPKBP1. Interacts with ARRB2; the interaction enhances MAPK10 activation by MAP3K5. Interacts with SARM1. Interacts with JUND; interaction is inhibited in the presence of MEN1. It depends on Mg(2+) as a cofactor. Dually phosphorylated on Thr-221 and Tyr-223 by MAP2K4 and MAP2K7, which activates the enzyme. MAP2K7 shows a strong preference for Thr-221 while MAP2K4 phosphorylates Tyr-223 preferentially. Weakly autophosphorylated on threonine and tyrosine residues in vitro. In terms of processing, palmitoylation regulates subcellular location and axonal development. As to expression, brain (at protein level). Expressed specifically in neurons of the hippocampus, cortex, cerebellum, brainstem, and spinal cord. Seems to be also found in testis, and very weakly in the heart.

It localises to the cytoplasm. Its subcellular location is the membrane. The protein localises to the nucleus. The protein resides in the mitochondrion. The catalysed reaction is L-seryl-[protein] + ATP = O-phospho-L-seryl-[protein] + ADP + H(+). The enzyme catalyses L-threonyl-[protein] + ATP = O-phospho-L-threonyl-[protein] + ADP + H(+). Activated by threonine and tyrosine phosphorylation by two dual specificity kinases, MAP2K4 and MAP2K7. MAP2K7 phosphorylates MAPK10 on Thr-221 causing a conformational change and a large increase in Vmax for the enzyme. MAP2K4 then phosphorylates Tyr-223 resulting in a further increase in Vmax. Inhibited by dual specificity phosphatases, such as DUSP1. Inhibited by HDAC9. Its function is as follows. Serine/threonine-protein kinase involved in various processes such as neuronal proliferation, differentiation, migration and programmed cell death. Extracellular stimuli such as pro-inflammatory cytokines or physical stress stimulate the stress-activated protein kinase/c-Jun N-terminal kinase (SAP/JNK) signaling pathway. In this cascade, two dual specificity kinases MAP2K4/MKK4 and MAP2K7/MKK7 phosphorylate and activate MAPK10/JNK3. In turn, MAPK10/JNK3 phosphorylates a number of transcription factors, primarily components of AP-1 such as JUN and ATF2 and thus regulates AP-1 transcriptional activity. Plays regulatory roles in the signaling pathways during neuronal apoptosis. Phosphorylates the neuronal microtubule regulator STMN2. Acts in the regulation of the amyloid-beta precursor protein/APP signaling during neuronal differentiation by phosphorylating APP. Also participates in neurite growth in spiral ganglion neurons. Phosphorylates the CLOCK-BMAL1 heterodimer and plays a role in the photic regulation of the circadian clock. Phosphorylates JUND and this phosphorylation is inhibited in the presence of MEN1. The polypeptide is Mitogen-activated protein kinase 10 (Mapk10) (Mus musculus (Mouse)).